A 380-amino-acid chain; its full sequence is E3 ubiquitin-protein ligase RNF13 (380 aa).

An N-terminal signal peptide occupies residues M1–A34. Residues D35 to Y182 are Lumenal-facing. The PA domain maps to K65–D160. N88 carries an N-linked (GlcNAc...) asparagine glycan. A helical membrane pass occupies residues Y183–I203. At T204–V380 the chain is on the cytoplasmic side. Residues C240 to K282 form an RING-type; atypical zinc finger. The segment at V285 to V380 is disordered. 2 stretches are compositionally biased toward acidic residues: residues S292 to E304 and S339 to E356.

In terms of assembly, interacts with ERN1. Autoubiquitinated.

Its subcellular location is the endoplasmic reticulum membrane. It is found in the late endosome membrane. The protein localises to the lysosome membrane. It localises to the nucleus inner membrane. It carries out the reaction S-ubiquitinyl-[E2 ubiquitin-conjugating enzyme]-L-cysteine + [acceptor protein]-L-lysine = [E2 ubiquitin-conjugating enzyme]-L-cysteine + N(6)-ubiquitinyl-[acceptor protein]-L-lysine.. It functions in the pathway protein modification; protein ubiquitination. Its function is as follows. E3 ubiquitin-protein ligase that regulates cell proliferation. Involved in apoptosis regulation. Mediates ER stress-induced activation of JNK signaling pathway and apoptosis by promoting ERN1 activation and splicing of XBP1 mRNA. Also involved in protein trafficking and localization. This Bos taurus (Bovine) protein is E3 ubiquitin-protein ligase RNF13 (RNF13).